A 734-amino-acid polypeptide reads, in one-letter code: MTRALILVAICLMLTLNNAAETKVHIVYLGEKQHDDPDSVTESHHQMLWSILGSKEAAHDSMTPWLLSFRSQTNQFPSESTLRFYELQTTRTWDYLQHTSKHPKNILNQTNMGDQLIIGVVDSVTLNWFGFILLKQEYGQSLNHSVTMVLDQYQNVGKEVQLGHAENPEYISPRDFDGHGTHVAATAAGSFVPDTNYLGLGRGTARGGAPRARIAMYKACWHLVTGATTCSAADLVKAIDEAIHDGVDVLSISNGFSVPLFPEVDTQDGVAVGAFHAVAKGIPVVCAGGNAGPSSQTISNTAPWIITVAATTQDRSFPTFITLGNNVTVVGQALYQGPDIDFTELVYPEDSGASNETFYGVCEDLAKNPAHIIEEKIVLCFTKSTSYSTMIQAASDVVKLDGYGVIVARNPGHQLSPCFGFPCLAVDYELGTDILFYIRSTRSPVAKIQPTRTLVGLPVATKVATFSSRGPNSISPAILKPDIAAPGVNILAATSPNDTFYDKGFAMKSGTSMSAPVVAGIVALLKSVHPHWSPAAIRSAIVTTAWRTDPSGEPIFADGSNRKLADPFDYGGGVVNSEKAANPGLVYDMGVKDYILYLCSVGYTDSSITGLVSKKTVCANPKPSVLDLNLPSITIPNLAKEVTITRTVTNVGPVGSVYKPVIEAPMGVNVTVTPSTLVFNAYTRKLSFKVRVLTNHIVNTGYYFGSLTWTDSVHNVVIPVSVRTQIMQRYYDEN.

Positions 1–19 (MTRALILVAICLMLTLNNA) are cleaved as a signal peptide. A propeptide spans 20-88 (AETKVHIVYL…ESTLRFYELQ (69 aa)) (activation peptide). In terms of domain architecture, Peptidase S8 spans 92–581 (TWDYLQHTSK…GGVVNSEKAA (490 aa)). Residue Asn-108 is glycosylated (N-linked (GlcNAc...) asparagine). Asp-122 serves as the catalytic Charge relay system. N-linked (GlcNAc...) asparagine glycosylation occurs at Asn-143. The Charge relay system role is filled by His-179. Residues Asn-326 and Asn-355 are each glycosylated (N-linked (GlcNAc...) asparagine). One can recognise a PA domain in the interval 361–438 (VCEDLAKNPA…ELGTDILFYI (78 aa)). A glycan (N-linked (GlcNAc...) asparagine) is linked at Asn-497. The active-site Charge relay system is the Ser-512. Residue Asn-669 is glycosylated (N-linked (GlcNAc...) asparagine).

The protein belongs to the peptidase S8 family.

It is found in the secreted. The sequence is that of Subtilisin-like protease SBT3.2 from Arabidopsis thaliana (Mouse-ear cress).